A 183-amino-acid polypeptide reads, in one-letter code: Ribosome rescue factor SmrB (183 aa).

One can recognise a Smr domain in the interval 98–173 (LDLHGLTQLQ…GDAALLVLIE (76 aa)).

This sequence belongs to the SmrB family. As to quaternary structure, associates with collided ribosomes, but not with correctly translating polysomes.

Its function is as follows. Acts as a ribosome collision sensor. Detects stalled/collided disomes (pairs of ribosomes where the leading ribosome is stalled and a second ribosome has collided with it) and endonucleolytically cleaves mRNA at the 5' boundary of the stalled ribosome. Stalled/collided disomes form a new interface (primarily via the 30S subunits) that binds SmrB. Cleaved mRNA becomes available for tmRNA ligation, leading to ribosomal subunit dissociation and rescue of stalled ribosomes. The protein is Ribosome rescue factor SmrB of Salmonella paratyphi A (strain ATCC 9150 / SARB42).